A 405-amino-acid chain; its full sequence is 4-hydroxy-3-methylbut-2-en-1-yl diphosphate synthase (ferredoxin) (405 aa).

[4Fe-4S] cluster is bound by residues Cys-314, Cys-317, Cys-348, and Glu-355.

The protein belongs to the IspG family. [4Fe-4S] cluster serves as cofactor.

The enzyme catalyses (2E)-4-hydroxy-3-methylbut-2-enyl diphosphate + 2 oxidized [2Fe-2S]-[ferredoxin] + H2O = 2-C-methyl-D-erythritol 2,4-cyclic diphosphate + 2 reduced [2Fe-2S]-[ferredoxin] + H(+). It participates in isoprenoid biosynthesis; isopentenyl diphosphate biosynthesis via DXP pathway; isopentenyl diphosphate from 1-deoxy-D-xylulose 5-phosphate: step 5/6. In terms of biological role, converts 2C-methyl-D-erythritol 2,4-cyclodiphosphate (ME-2,4cPP) into 1-hydroxy-2-methyl-2-(E)-butenyl 4-diphosphate. This is 4-hydroxy-3-methylbut-2-en-1-yl diphosphate synthase (ferredoxin) from Prochlorococcus marinus subsp. pastoris (strain CCMP1986 / NIES-2087 / MED4).